The chain runs to 214 residues: Serine protease inhibitor 2.1 (214 aa).

This sequence belongs to the serpin family.

The chain is Serine protease inhibitor 2.1 from Rattus norvegicus (Rat).